Reading from the N-terminus, the 149-residue chain is SsrA-binding protein (149 aa).

This sequence belongs to the SmpB family.

It localises to the cytoplasm. Its function is as follows. Required for rescue of stalled ribosomes mediated by trans-translation. Binds to transfer-messenger RNA (tmRNA), required for stable association of tmRNA with ribosomes. tmRNA and SmpB together mimic tRNA shape, replacing the anticodon stem-loop with SmpB. tmRNA is encoded by the ssrA gene; the 2 termini fold to resemble tRNA(Ala) and it encodes a 'tag peptide', a short internal open reading frame. During trans-translation Ala-aminoacylated tmRNA acts like a tRNA, entering the A-site of stalled ribosomes, displacing the stalled mRNA. The ribosome then switches to translate the ORF on the tmRNA; the nascent peptide is terminated with the 'tag peptide' encoded by the tmRNA and targeted for degradation. The ribosome is freed to recommence translation, which seems to be the essential function of trans-translation. The protein is SsrA-binding protein of Wolbachia pipientis subsp. Culex pipiens (strain wPip).